We begin with the raw amino-acid sequence, 182 residues long: MEKNQKEIEKELEELRKREKELEEKIQKLETIAKNSNLRVAELQREIDYLKERYRRDLEEQRKFCYEKFAYDLLEVMDNFERALEYGRQAQDVKSILLGIEMIYSEMKKIFEKYGIREIPVEGKEFDPYVAEAVEKVETDQYPPNTVVKVIRKGYYIHDKVLRPARVAVAVPPQEEEGEEIT.

Belongs to the GrpE family. As to quaternary structure, homodimer.

The protein resides in the cytoplasm. Its function is as follows. Participates actively in the response to hyperosmotic and heat shock by preventing the aggregation of stress-denatured proteins, in association with DnaK and GrpE. It is the nucleotide exchange factor for DnaK and may function as a thermosensor. Unfolded proteins bind initially to DnaJ; upon interaction with the DnaJ-bound protein, DnaK hydrolyzes its bound ATP, resulting in the formation of a stable complex. GrpE releases ADP from DnaK; ATP binding to DnaK triggers the release of the substrate protein, thus completing the reaction cycle. Several rounds of ATP-dependent interactions between DnaJ, DnaK and GrpE are required for fully efficient folding. This Aquifex aeolicus (strain VF5) protein is Protein GrpE.